The sequence spans 126 residues: uncharacterized protein (126 aa).

Residues Met1–Glu101 form a disordered region. Composition is skewed to polar residues over residues Gly14–Pro27 and Asp86–Ala99.

This is an uncharacterized protein from Schizosaccharomyces pombe (strain 972 / ATCC 24843) (Fission yeast).